A 440-amino-acid polypeptide reads, in one-letter code: Transposon Ty1-BR Gag polyprotein (440 aa).

Composition is skewed to polar residues over residues 1 to 10, 48 to 60, and 127 to 152; these read MESQQLSNYP, TKANSQQTTTPAS, and QSQFPQYPSSVGTPLSTPSPESGNTF. 3 disordered regions span residues 1 to 93, 126 to 173, and 352 to 440; these read MESQ…MMTQ, PQSQ…RPPP, and GSRN…PETY. The segment covering 153 to 165 has biased composition (low complexity); the sequence is TDSSSADSDMTST. The RNA-binding stretch occupies residues 299-401; the sequence is NNGIHINNKV…NSKSKTARAH (103 aa). Over residues 402–418 the composition is skewed to low complexity; it reads NVSTSNNSPSTDNDSIS. A Phosphoserine modification is found at Ser416. Over residues 419-428 the composition is skewed to polar residues; sequence KSTTEPIQLN. Residues 429–440 are compositionally biased toward basic and acidic residues; that stretch reads NKHDLHLRPETY.

Homotrimer.

The protein resides in the cytoplasm. In terms of biological role, capsid protein (CA) is the structural component of the virus-like particle (VLP), forming the shell that encapsulates the retrotransposons dimeric RNA genome. The particles are assembled from trimer-clustered units and there are holes in the capsid shells that allow for the diffusion of macromolecules. CA also has nucleocapsid-like chaperone activity, promoting primer tRNA(i)-Met annealing to the multipartite primer-binding site (PBS), dimerization of Ty1 RNA and initiation of reverse transcription. The sequence is that of Transposon Ty1-BR Gag polyprotein (TY1A-BR) from Saccharomyces cerevisiae (strain ATCC 204508 / S288c) (Baker's yeast).